A 223-amino-acid polypeptide reads, in one-letter code: uncharacterized protein (223 aa).

It to M.jannaschii MJ1453.

This is an uncharacterized protein from Methanothermobacter thermautotrophicus (strain ATCC 29096 / DSM 1053 / JCM 10044 / NBRC 100330 / Delta H) (Methanobacterium thermoautotrophicum).